Here is a 77-residue protein sequence, read N- to C-terminus: U10-lycotoxin-Ls1b (77 aa).

A signal peptide spans M1 to A20. The propeptide occupies E21–R26.

The protein belongs to the neurotoxin 19 (CSTX) family. 09 (U10-Lctx) subfamily. In terms of processing, contains 4 disulfide bonds. Expressed by the venom gland.

The protein localises to the secreted. This Lycosa singoriensis (Wolf spider) protein is U10-lycotoxin-Ls1b.